A 92-amino-acid polypeptide reads, in one-letter code: Small ribosomal subunit protein uS19c (92 aa).

The protein belongs to the universal ribosomal protein uS19 family.

It is found in the plastid. The protein resides in the chloroplast. Functionally, protein S19 forms a complex with S13 that binds strongly to the 16S ribosomal RNA. The chain is Small ribosomal subunit protein uS19c from Daucus carota (Wild carrot).